An 880-amino-acid polypeptide reads, in one-letter code: Valine--tRNA ligase (880 aa).

A 'HIGH' region motif is present at residues 49 to 59 (PNVTGKLHLGH). A 'KMSKS' region motif is present at residues 525 to 529 (KMSKS). Lys-528 is a binding site for ATP. Positions 809 to 880 (LEGLINIEEE…VKARLAELKR (72 aa)) form a coiled coil.

This sequence belongs to the class-I aminoacyl-tRNA synthetase family. ValS type 1 subfamily. In terms of assembly, monomer.

It is found in the cytoplasm. The catalysed reaction is tRNA(Val) + L-valine + ATP = L-valyl-tRNA(Val) + AMP + diphosphate. Functionally, catalyzes the attachment of valine to tRNA(Val). As ValRS can inadvertently accommodate and process structurally similar amino acids such as threonine, to avoid such errors, it has a 'posttransfer' editing activity that hydrolyzes mischarged Thr-tRNA(Val) in a tRNA-dependent manner. The protein is Valine--tRNA ligase of Geobacillus kaustophilus (strain HTA426).